The sequence spans 157 residues: MRIIGIDPGLARVGYGIIEIKNDKKILLDCGVIETGKEKKEEDRLYEIFKDLNELISHWKPNLAAVEKFFFYRSSTTISVVQARGVIMMVLASKKINISEYSPAQIKLTIAGSGKASKKEVLDAVMYNLELNKPPKPDDSADALAIALTKLNEEGFN.

Catalysis depends on residues Asp-7, Glu-67, and Asp-139. Positions 7, 67, and 139 each coordinate Mg(2+).

Belongs to the RuvC family. As to quaternary structure, homodimer which binds Holliday junction (HJ) DNA. The HJ becomes 2-fold symmetrical on binding to RuvC with unstacked arms; it has a different conformation from HJ DNA in complex with RuvA. In the full resolvosome a probable DNA-RuvA(4)-RuvB(12)-RuvC(2) complex forms which resolves the HJ. Requires Mg(2+) as cofactor.

The protein resides in the cytoplasm. It carries out the reaction Endonucleolytic cleavage at a junction such as a reciprocal single-stranded crossover between two homologous DNA duplexes (Holliday junction).. Its function is as follows. The RuvA-RuvB-RuvC complex processes Holliday junction (HJ) DNA during genetic recombination and DNA repair. Endonuclease that resolves HJ intermediates. Cleaves cruciform DNA by making single-stranded nicks across the HJ at symmetrical positions within the homologous arms, yielding a 5'-phosphate and a 3'-hydroxyl group; requires a central core of homology in the junction. The consensus cleavage sequence is 5'-(A/T)TT(C/G)-3'. Cleavage occurs on the 3'-side of the TT dinucleotide at the point of strand exchange. HJ branch migration catalyzed by RuvA-RuvB allows RuvC to scan DNA until it finds its consensus sequence, where it cleaves and resolves the cruciform DNA. The protein is Crossover junction endodeoxyribonuclease RuvC of Prochlorococcus marinus (strain MIT 9312).